A 316-amino-acid chain; its full sequence is tRNA dimethylallyltransferase (316 aa).

Glycine 15–serine 22 contributes to the ATP binding site. Position 17 to 22 (threonine 17 to serine 22) interacts with substrate. Positions aspartate 40–glutamine 43 are interaction with substrate tRNA.

The protein belongs to the IPP transferase family. Monomer. The cofactor is Mg(2+).

The enzyme catalyses adenosine(37) in tRNA + dimethylallyl diphosphate = N(6)-dimethylallyladenosine(37) in tRNA + diphosphate. Functionally, catalyzes the transfer of a dimethylallyl group onto the adenine at position 37 in tRNAs that read codons beginning with uridine, leading to the formation of N6-(dimethylallyl)adenosine (i(6)A). In Chlorobium limicola (strain DSM 245 / NBRC 103803 / 6330), this protein is tRNA dimethylallyltransferase.